A 582-amino-acid chain; its full sequence is Ubiquilin-1 (582 aa).

Disordered stretches follow at residues 1–26 and 102–136; these read MAES…AEPK and RPQD…AANS. Alanine 2 is subject to N-acetylalanine. Residues 28 to 102 enclose the Ubiquitin-like domain; sequence MKVTVKTPKE…VHLVIKTQNR (75 aa). Over residues 102-135 the composition is skewed to polar residues; that stretch reads RPQDNSAQQTNTTGNSVTSSPAPDSNPTSGPAAN. The interaction with UBXN4 stretch occupies residues 169–422; the sequence is QLLSNPEMMV…LNNPLFAGNP (254 aa). STI1 domains follow at residues 173-201 and 203-242; these read NPEM…QLIM and NPQM…MQEM. A disordered region spans residues 285–365; it reads NPFASLVSSP…NLVPGAGASM (81 aa). Polar residues predominate over residues 290-304; the sequence is LVSSPSSAEGTQPSR. A compositionally biased stretch (low complexity) spans 318-346; it reads QTPQSSPASGSTGSTTNTVSTSAGNATST. STI1 domains follow at residues 381–428 and 432–464; these read NPQL…QEQM and LPTF…QQGL. The tract at residues 481–513 is disordered; the sequence is GLAAGNSGGPAGTTAPSTAPGEDTNPQGGAAEP. Residues 539–579 form the UBA domain; that stretch reads RFQQQLEQLSAMGFLNREANLQALIATGGDINAAIERLLGS.

As to quaternary structure, monomer and homodimer. Heterodimer with UBQLN2. Binds CD47. Binds NBL1. Binds GABRA1, GABRA2, GABRA3, GABRA6, GABRB1, GABRB2 and GABRB3. Binds UBE3A, BTRC, P4HB and MTOR. Interacts with the proteasome 19S subunit. Interacts (via ubiquitin-like domain) with TREX1; the interaction is direct and may control TREX1 subcellular location. Forms a complex with UBXN4 and VCP. Interacts (via UBA domain) with UBQLN4 (via ubiquitin-like domain). Found in a complex with UBQLN2 and MAP1LC3A/B/C. The monomeric form interacts with PSEN1 and PSEN2. Interacts with ORAI1. Interacts (via UBA domain) with TICAM1. Interacts with EPS15. Interacts (via UBA domain) with UBA52 and (via ubiquitin-like domain) with PSMD3 and PSMD4. Interacts with HERPUD1. Interacts with MAP1LC3A/B/C in the presence of UBQLN4. Interacts (via ubiquitin-like domain) with EPS15 (via UIM domains) and both the ubiquitinated and non-ubiquitinated forms can interact with EPS15. Interacts (via ubiquitin-like domain) with EPS15L1, HGS (via UIM domain) and STAM2 (via UIM domain). Interacts with BCL2L10/BCL-B; in the cytoplasm. In terms of processing, degraded during both macroautophagy and during chaperone-mediated autophagy (CMA). Phosphorylated. Post-translationally, ubiquitinated.

Its subcellular location is the nucleus. It localises to the cytoplasm. It is found in the endoplasmic reticulum. The protein resides in the cytoplasmic vesicle. The protein localises to the autophagosome. Its subcellular location is the cell membrane. Plays an important role in the regulation of different protein degradation mechanisms and pathways including ubiquitin-proteasome system (UPS), autophagy and endoplasmic reticulum-associated protein degradation (ERAD) pathway. Mediates the proteasomal targeting of misfolded or accumulated proteins for degradation by binding (via UBA domain) to their polyubiquitin chains and by interacting (via ubiquitin-like domain) with the subunits of the proteasome. Plays a role in the ERAD pathway via its interaction with ER-localized proteins UBXN4, VCP and HERPUD1 and may form a link between the polyubiquitinated ERAD substrates and the proteasome. Plays a role in unfolded protein response (UPR) by attenuating the induction of UPR-inducible genes, DDTI3/CHOP, HSPA5 and PDIA2 during ER stress. Involved in the regulation of macroautophagy and autophagosome formation; required for maturation of autophagy-related protein LC3 from the cytosolic form LC3-I to the membrane-bound form LC3-II and may assist in the maturation of autophagosomes to autolysosomes by mediating autophagosome-lysosome fusion. Negatively regulates the TICAM1/TRIF-dependent toll-like receptor signaling pathway by decreasing the abundance of TICAM1 via the autophagic pathway. Promotes the ubiquitination and lysosomal degradation of ORAI1, consequently down-regulating the ORAI1-mediated Ca2+ mobilization. Suppresses the maturation and proteasomal degradation of amyloid beta A4 protein (A4) by stimulating the lysine 63 (K63)-linked polyubiquitination. Delays the maturation of A4 by sequestering it in the Golgi apparatus and preventing its transport to the cell surface for subsequent processing. Promotes the surface expression of GABA-A receptors. Ubiquitinates BCL2L10 and thereby stabilizes protein abundance. This Rattus norvegicus (Rat) protein is Ubiquilin-1 (Ubqln1).